Here is a 419-residue protein sequence, read N- to C-terminus: UDP-N-acetylglucosamine 1-carboxyvinyltransferase (419 aa).

Residue 22 to 23 participates in phosphoenolpyruvate binding; sequence KN. Position 93 (Arg93) interacts with UDP-N-acetyl-alpha-D-glucosamine. The Proton donor role is filled by Cys117. Cys117 carries the post-translational modification 2-(S-cysteinyl)pyruvic acid O-phosphothioketal. UDP-N-acetyl-alpha-D-glucosamine is bound by residues Asp306 and Ile328.

Belongs to the EPSP synthase family. MurA subfamily.

The protein resides in the cytoplasm. It catalyses the reaction phosphoenolpyruvate + UDP-N-acetyl-alpha-D-glucosamine = UDP-N-acetyl-3-O-(1-carboxyvinyl)-alpha-D-glucosamine + phosphate. It functions in the pathway cell wall biogenesis; peptidoglycan biosynthesis. Functionally, cell wall formation. Adds enolpyruvyl to UDP-N-acetylglucosamine. The chain is UDP-N-acetylglucosamine 1-carboxyvinyltransferase from Ruthia magnifica subsp. Calyptogena magnifica.